The sequence spans 259 residues: Dysbindin domain-containing protein 2 (259 aa).

2 disordered regions span residues 27 to 56 (SCERVSPPPPLPHFRLPPLPRSRLPGPVSR) and 174 to 259 (ADVF…GACS). Residues 32-46 (SPPPPLPHFRLPPLP) are compositionally biased toward pro residues. Over residues 205-223 (TSDRTTSRTSSSSSSDSST) the composition is skewed to low complexity. Phosphoserine is present on residues Ser217 and Ser218. Thr237 is subject to Phosphothreonine. Ser242 carries the post-translational modification Phosphoserine.

This sequence belongs to the dysbindin family. As to quaternary structure, monomer. Interacts with CSNK1D and CSNK1E. In terms of tissue distribution, detected in brain.

Its function is as follows. May modulate the activity of casein kinase-1. Inhibits CSNK1D autophosphorylation (in vitro). The chain is Dysbindin domain-containing protein 2 (DBNDD2) from Homo sapiens (Human).